The primary structure comprises 304 residues: UDP-3-O-acyl-N-acetylglucosamine deacetylase (304 aa).

Zn(2+) contacts are provided by His79, His238, and Asp242. His265 (proton donor) is an active-site residue.

It belongs to the LpxC family. Zn(2+) serves as cofactor.

The catalysed reaction is a UDP-3-O-[(3R)-3-hydroxyacyl]-N-acetyl-alpha-D-glucosamine + H2O = a UDP-3-O-[(3R)-3-hydroxyacyl]-alpha-D-glucosamine + acetate. Its pathway is glycolipid biosynthesis; lipid IV(A) biosynthesis; lipid IV(A) from (3R)-3-hydroxytetradecanoyl-[acyl-carrier-protein] and UDP-N-acetyl-alpha-D-glucosamine: step 2/6. In terms of biological role, catalyzes the hydrolysis of UDP-3-O-myristoyl-N-acetylglucosamine to form UDP-3-O-myristoylglucosamine and acetate, the committed step in lipid A biosynthesis. In Photobacterium profundum (strain SS9), this protein is UDP-3-O-acyl-N-acetylglucosamine deacetylase.